The chain runs to 247 residues: uncharacterized protein (247 aa).

3 helical membrane-spanning segments follow: residues 108 to 128 (WYINFIPMFVYGCLDEAFLII), 136 to 156 (IFSVYNGMSMLASAAVANIIC), and 194 to 214 (GAKLSGLWMGLTLGMLPLFFI).

Its subcellular location is the membrane. This is an uncharacterized protein from Caenorhabditis elegans.